A 389-amino-acid chain; its full sequence is MKKLLKSALLSAAFAGSVGSLQALPVGNPSDPSLLIDGTIWEGAAGDPCDPCATWCDAISLRAGFYGDYVFDRILKVDAPKTFSMGAKPTGSATANYTTAVDRPNPAYNKHLHDAEWFTNAGFIALNIWDRFDVFCTLGASNGYIKGNSTAFNLVGLFGVKGTSVAANELPNVSLSNGVVELYTDTSFSWSVGARGALWECGCATLGAEFQYAQSKPKVEELNVICNVAQFSVNKPKGYKGVAFPLPTDAGVATATGTKSATINYHEWQVGASLSYRLNSLVPYIGVQWSRATFDADNIRIAQPKLPTAVLNLTAWNPSLLGNTTTLATSDSFSDFMQIVSCQINKFKSRKACGVTVGATLVDADKWSLTAEARLINERAAHVSGQFRF.

The protein belongs to the chlamydial porin (CP) (TC 1.B.2) family. In terms of assembly, part of a disulfide cross-linked outer membrane complex (COMC) composed of the major outer membrane porin (MOMP), the small cysteine-rich protein (OmcA) and the large cysteine-rich periplasmic protein (OmcB).

Its subcellular location is the cell outer membrane. In terms of biological role, in elementary bodies (EBs, the infectious stage, which is able to survive outside the host cell) provides the structural integrity of the outer envelope through disulfide cross-links with the small cysteine-rich protein and the large cysteine-rich periplasmic protein. It has been described in publications as the Sarkosyl-insoluble COMC (Chlamydia outer membrane complex), and serves as the functional equivalent of peptidoglycan. Permits diffusion of specific solutes through the outer membrane. The sequence is that of Major outer membrane porin (ompA) from Chlamydia pneumoniae (Chlamydophila pneumoniae).